Consider the following 156-residue polypeptide: Arginine repressor (156 aa).

Belongs to the ArgR family.

Its subcellular location is the cytoplasm. Its pathway is amino-acid biosynthesis; L-arginine biosynthesis [regulation]. Its function is as follows. Regulates arginine biosynthesis genes. This Enterobacter sp. (strain 638) protein is Arginine repressor.